The chain runs to 122 residues: Succinate dehydrogenase assembly factor 3, mitochondrial (122 aa).

The transit peptide at 1–47 (MHPSVVRLVKPRRPERITSPILPPLPLYRAILRAHHRKLPQELRYLG) directs the protein to the mitochondrion.

This sequence belongs to the complex I LYR family. SDHAF3 subfamily. Interacts with the iron-sulfur protein subunit within the SDH catalytic dimer.

The protein resides in the mitochondrion matrix. Its function is as follows. Plays an essential role in the assembly of succinate dehydrogenase (SDH), an enzyme complex (also referred to as respiratory complex II) that is a component of both the tricarboxylic acid (TCA) cycle and the mitochondrial electron transport chain, and which couples the oxidation of succinate to fumarate with the reduction of ubiquinone (coenzyme Q) to ubiquinol. Promotes maturation of the iron-sulfur protein subunit of the SDH catalytic dimer, protecting it from the deleterious effects of oxidants. May act together with SDHAF1. The chain is Succinate dehydrogenase assembly factor 3, mitochondrial from Candida albicans (strain SC5314 / ATCC MYA-2876) (Yeast).